Consider the following 21-residue polypeptide: EDHPVHNRGEYSVCDSVNVWV.

The protein belongs to the NGF-beta family. In terms of assembly, homodimer; non-covalently linked. In terms of processing, glycosylated. In terms of tissue distribution, expressed by the venom gland.

It is found in the secreted. Its function is as follows. Nerve growth factor is important for the development and maintenance of the sympathetic and sensory nervous systems. It stimulates division and differentiation of sympathetic and embryonic sensory neurons as well as basal forebrain cholinergic neurons in the brain. Its relevance in the snake venom is not clear. However, it has been shown to inhibit metalloproteinase-dependent proteolysis of platelet glycoprotein Ib alpha, suggesting a metalloproteinase inhibition to prevent metalloprotease autodigestion and/or protection against prey proteases. Binds a lipid between the two protein chains in the homodimer. The lipid-bound form promotes histamine relase from mouse mast cells, contrary to the lipid-free form. This Bothrops cotiara (Cotiara) protein is Venom nerve growth factor Bco12.